The sequence spans 465 residues: UDP-N-acetylmuramate--L-alanine ligase (465 aa).

Residue 114 to 120 (GAHGKTT) participates in ATP binding.

It belongs to the MurCDEF family.

It localises to the cytoplasm. It catalyses the reaction UDP-N-acetyl-alpha-D-muramate + L-alanine + ATP = UDP-N-acetyl-alpha-D-muramoyl-L-alanine + ADP + phosphate + H(+). The protein operates within cell wall biogenesis; peptidoglycan biosynthesis. Cell wall formation. The sequence is that of UDP-N-acetylmuramate--L-alanine ligase from Syntrophomonas wolfei subsp. wolfei (strain DSM 2245B / Goettingen).